Consider the following 130-residue polypeptide: MAKLSNEELLDAFKEMTLIELSEFVKQFEETFDVSAAAPVAVAAAGAPAAGGEAAPAEEEKDEFDVILESAGDKKIQVIKEVRGLTSLGLKDAKDLVESAPKPVLEKAKKEDAEKAKEALEAAGATVTLK.

The protein belongs to the bacterial ribosomal protein bL12 family. Homodimer. Part of the ribosomal stalk of the 50S ribosomal subunit. Forms a multimeric L10(L12)X complex, where L10 forms an elongated spine to which 2 to 4 L12 dimers bind in a sequential fashion. Binds GTP-bound translation factors.

Forms part of the ribosomal stalk which helps the ribosome interact with GTP-bound translation factors. Is thus essential for accurate translation. This chain is Large ribosomal subunit protein bL12, found in Cutibacterium acnes (strain DSM 16379 / KPA171202) (Propionibacterium acnes).